Consider the following 294-residue polypeptide: Lipoyl synthase (294 aa).

7 residues coordinate [4Fe-4S] cluster: cysteine 35, cysteine 40, cysteine 46, cysteine 61, cysteine 65, cysteine 68, and serine 275. In terms of domain architecture, Radical SAM core spans cysteine 46–arginine 264.

The protein belongs to the radical SAM superfamily. Lipoyl synthase family. It depends on [4Fe-4S] cluster as a cofactor.

It is found in the cytoplasm. The enzyme catalyses [[Fe-S] cluster scaffold protein carrying a second [4Fe-4S](2+) cluster] + N(6)-octanoyl-L-lysyl-[protein] + 2 oxidized [2Fe-2S]-[ferredoxin] + 2 S-adenosyl-L-methionine + 4 H(+) = [[Fe-S] cluster scaffold protein] + N(6)-[(R)-dihydrolipoyl]-L-lysyl-[protein] + 4 Fe(3+) + 2 hydrogen sulfide + 2 5'-deoxyadenosine + 2 L-methionine + 2 reduced [2Fe-2S]-[ferredoxin]. It participates in protein modification; protein lipoylation via endogenous pathway; protein N(6)-(lipoyl)lysine from octanoyl-[acyl-carrier-protein]: step 2/2. Functionally, catalyzes the radical-mediated insertion of two sulfur atoms into the C-6 and C-8 positions of the octanoyl moiety bound to the lipoyl domains of lipoate-dependent enzymes, thereby converting the octanoylated domains into lipoylated derivatives. The chain is Lipoyl synthase from Anaeromyxobacter dehalogenans (strain 2CP-C).